The chain runs to 201 residues: Putative ferritin heavy polypeptide-like 19 (201 aa).

Residues 1-123 (MAFYFDQDDA…GYLSNLHKMG (123 aa)) enclose the Ferritin-like diiron domain.

Belongs to the ferritin family.

The protein is Putative ferritin heavy polypeptide-like 19 (FTH1P19) of Homo sapiens (Human).